We begin with the raw amino-acid sequence, 125 residues long: DNA-directed RNA polymerases I and III subunit RPAC2 (125 aa).

Belongs to the archaeal Rpo11/eukaryotic RPB11/RPC19 RNA polymerase subunit family. As to quaternary structure, component of the RNA polymerase I (Pol I) and RNA polymerase III (Pol III) complexes consisting of 14 and 17 subunits, respectively.

The protein resides in the nucleus. Functionally, DNA-dependent RNA polymerase catalyzes the transcription of DNA into RNA using the four ribonucleoside triphosphates as substrates. Common core component of RNA polymerases I and III which synthesize ribosomal RNA precursors and small RNAs, such as 5S rRNA and tRNAs, respectively. The chain is DNA-directed RNA polymerases I and III subunit RPAC2 (rpc19) from Schizosaccharomyces pombe (strain 972 / ATCC 24843) (Fission yeast).